The chain runs to 317 residues: uncharacterized protein (317 aa).

The next 6 membrane-spanning stretches (helical) occupy residues 14-34 (IPLLSNDLISMLSGGVAATVS), 72-92 (LIGFFRGNGTNCLRAFPYGAV), 119-139 (LLFGAIAGAASCATTYPLDIA), 196-216 (TLLNVVPYVSICFFTFEFCKQ), 230-250 (LFLGGFTGIIGQTLTFPADVL), and 291-307 (SNMLKIIPVMSITWYTY). 3 Solcar repeats span residues 18-103 (SNDL…LKQR), 113-217 (LENH…CKQK), and 224-313 (LTAF…VSKM).

The protein belongs to the mitochondrial carrier (TC 2.A.29) family.

It localises to the mitochondrion inner membrane. This is an uncharacterized protein from Schizosaccharomyces pombe (strain 972 / ATCC 24843) (Fission yeast).